The following is a 213-amino-acid chain: Superoxide dismutase [Fe] (213 aa).

His-26, His-73, Asp-156, and His-160 together coordinate Fe cation.

Belongs to the iron/manganese superoxide dismutase family. As to quaternary structure, homodimer. Fe cation serves as cofactor.

It catalyses the reaction 2 superoxide + 2 H(+) = H2O2 + O2. In terms of biological role, destroys superoxide anion radicals which are normally produced within the cells and which are toxic to biological systems. The protein is Superoxide dismutase [Fe] (sodB) of Helicobacter pylori (strain J99 / ATCC 700824) (Campylobacter pylori J99).